Reading from the N-terminus, the 200-residue chain is Potassium-transporting ATPase KdpC subunit (200 aa).

A helical membrane pass occupies residues 6-26 (PAVVLLILLTLITGIAYPLLT).

The protein belongs to the KdpC family. As to quaternary structure, the system is composed of three essential subunits: KdpA, KdpB and KdpC.

It localises to the cell inner membrane. Part of the high-affinity ATP-driven potassium transport (or Kdp) system, which catalyzes the hydrolysis of ATP coupled with the electrogenic transport of potassium into the cytoplasm. This subunit acts as a catalytic chaperone that increases the ATP-binding affinity of the ATP-hydrolyzing subunit KdpB by the formation of a transient KdpB/KdpC/ATP ternary complex. The polypeptide is Potassium-transporting ATPase KdpC subunit (Yersinia enterocolitica serotype O:8 / biotype 1B (strain NCTC 13174 / 8081)).